Consider the following 323-residue polypeptide: Acetyl-coenzyme A carboxylase carboxyl transferase subunit alpha (323 aa).

One can recognise a CoA carboxyltransferase C-terminal domain in the interval Arg39–Gln293.

The protein belongs to the AccA family. As to quaternary structure, acetyl-CoA carboxylase is a heterohexamer composed of biotin carboxyl carrier protein (AccB), biotin carboxylase (AccC) and two subunits each of ACCase subunit alpha (AccA) and ACCase subunit beta (AccD).

The protein localises to the cytoplasm. The enzyme catalyses N(6)-carboxybiotinyl-L-lysyl-[protein] + acetyl-CoA = N(6)-biotinyl-L-lysyl-[protein] + malonyl-CoA. The protein operates within lipid metabolism; malonyl-CoA biosynthesis; malonyl-CoA from acetyl-CoA: step 1/1. Functionally, component of the acetyl coenzyme A carboxylase (ACC) complex. First, biotin carboxylase catalyzes the carboxylation of biotin on its carrier protein (BCCP) and then the CO(2) group is transferred by the carboxyltransferase to acetyl-CoA to form malonyl-CoA. The protein is Acetyl-coenzyme A carboxylase carboxyl transferase subunit alpha of Burkholderia lata (strain ATCC 17760 / DSM 23089 / LMG 22485 / NCIMB 9086 / R18194 / 383).